The following is a 116-amino-acid chain: Proline-rich protein 9 (116 aa).

This Mus musculus (Mouse) protein is Proline-rich protein 9 (Prr9).